We begin with the raw amino-acid sequence, 115 residues long: Macroconotoxin Mu8.1 (115 aa).

The N-terminal stretch at 1 to 21 (MDMKMTFSGLVLVVLVTTVVG) is a signal peptide. Residues 22 to 26 (SSVRR) constitute a propeptide that is removed on maturation. Intrachain disulfides connect cysteine 36/cysteine 77, cysteine 44/cysteine 60, cysteine 48/cysteine 56, cysteine 83/cysteine 115, and cysteine 87/cysteine 97. Glutamate 40 contributes to the Zn(2+) binding site. Histidine 68 is a Zn(2+) binding site.

Mostly found as a homodimer in solution; non-covalently bound. As to expression, expressed by the venom duct.

The protein resides in the secreted. Its function is as follows. Modestly and reversibly inhibits Cav2.3/CACNA1E (IC(50)=5.8 uM) recombinantly expressed in HEK293 cells without affecting the voltage dependence of activation. In mouse DRG sensory neurons, modulates depolarization-induced calcium influx. This is Macroconotoxin Mu8.1 from Conus mucronatus (Pointed cone).